The chain runs to 286 residues: Phosphonates import ATP-binding protein PhnC (286 aa).

The 244-residue stretch at 3 to 246 folds into the ABC transporter domain; sequence FHLKQVTRRF…AVTEIYGTDS (244 aa). 35 to 42 contributes to the ATP binding site; the sequence is GRSGAGKS.

It belongs to the ABC transporter superfamily. Phosphonates importer (TC 3.A.1.9.1) family. In terms of assembly, the complex is composed of two ATP-binding proteins (PhnC), two transmembrane proteins (PhnE) and a solute-binding protein (PhnD).

The protein resides in the cell inner membrane. It carries out the reaction phosphonate(out) + ATP + H2O = phosphonate(in) + ADP + phosphate + H(+). Its function is as follows. Part of the ABC transporter complex PhnCDE involved in phosphonates import. Responsible for energy coupling to the transport system. The protein is Phosphonates import ATP-binding protein PhnC of Agrobacterium fabrum (strain C58 / ATCC 33970) (Agrobacterium tumefaciens (strain C58)).